A 398-amino-acid chain; its full sequence is Aspartate aminotransferase (398 aa).

Positions 36, 132, and 185 each coordinate L-aspartate. An N6-(pyridoxal phosphate)lysine modification is found at K248. R376 is an L-aspartate binding site.

Belongs to the class-I pyridoxal-phosphate-dependent aminotransferase family. In terms of assembly, homodimer. The cofactor is pyridoxal 5'-phosphate.

It is found in the cytoplasm. It catalyses the reaction L-aspartate + 2-oxoglutarate = oxaloacetate + L-glutamate. The chain is Aspartate aminotransferase (aspC) from Pseudomonas aeruginosa (strain ATCC 15692 / DSM 22644 / CIP 104116 / JCM 14847 / LMG 12228 / 1C / PRS 101 / PAO1).